The chain runs to 450 residues: Phosphoglucosamine mutase (450 aa).

S102 (phosphoserine intermediate) is an active-site residue. Positions 102, 242, 244, and 246 each coordinate Mg(2+). The residue at position 102 (S102) is a Phosphoserine.

Belongs to the phosphohexose mutase family. It depends on Mg(2+) as a cofactor. Activated by phosphorylation.

The catalysed reaction is alpha-D-glucosamine 1-phosphate = D-glucosamine 6-phosphate. Catalyzes the conversion of glucosamine-6-phosphate to glucosamine-1-phosphate. The sequence is that of Phosphoglucosamine mutase from Lachnospira eligens (strain ATCC 27750 / DSM 3376 / VPI C15-48 / C15-B4) (Eubacterium eligens).